A 471-amino-acid chain; its full sequence is UDP-N-acetylmuramate--L-alanine ligase (471 aa).

Position 114–120 (114–120) interacts with ATP; it reads GTHGKTT.

It belongs to the MurCDEF family.

It is found in the cytoplasm. It carries out the reaction UDP-N-acetyl-alpha-D-muramate + L-alanine + ATP = UDP-N-acetyl-alpha-D-muramoyl-L-alanine + ADP + phosphate + H(+). The protein operates within cell wall biogenesis; peptidoglycan biosynthesis. Its function is as follows. Cell wall formation. The polypeptide is UDP-N-acetylmuramate--L-alanine ligase (Allorhizobium ampelinum (strain ATCC BAA-846 / DSM 112012 / S4) (Agrobacterium vitis (strain S4))).